We begin with the raw amino-acid sequence, 705 residues long: Probable iron-sulfur-binding oxidoreductase FadF (705 aa).

Transmembrane regions (helical) follow at residues 4-24 (FLIANALLFLIVTAYAVYLFV), 71-91 (IIHVMFFYGFILVQFGAIDFI), 109-129 (AFTFFQEIVTFLILIAVGWAF), 146-166 (AGLVLIFIGGLMLTVLLGNGM), 173-193 (HGLSWSEPIASGIAFMLSGVG), and 199-219 (VIFYIAWWIHLLFLLSFLVYV). 4Fe-4S ferredoxin-type domains follow at residues 268–298 (QSQLLDLYACVECGRCTNMCPATGTGKMLSP) and 360–391 (GDVITEEEIWACTTCRNCEDQCPVMNEHVDKI). [4Fe-4S] cluster is bound by residues Cys-277, Cys-280, Cys-283, Cys-287, Cys-371, Cys-374, Cys-377, and Cys-381.

The cofactor is [4Fe-4S] cluster.

It localises to the cell membrane. The polypeptide is Probable iron-sulfur-binding oxidoreductase FadF (fadF) (Bacillus subtilis (strain 168)).